The following is a 224-amino-acid chain: Phosphoribosylformylglycinamidine synthase subunit PurQ (224 aa).

The region spanning 1–224 (MIAIIKFPGT…ILLRRLGEWA (224 aa)) is the Glutamine amidotransferase type-1 domain. C84 (nucleophile) is an active-site residue. Catalysis depends on residues H196 and E198.

As to quaternary structure, part of the FGAM synthase complex composed of 1 PurL, 1 PurQ and 2 PurS subunits.

It localises to the cytoplasm. The catalysed reaction is N(2)-formyl-N(1)-(5-phospho-beta-D-ribosyl)glycinamide + L-glutamine + ATP + H2O = 2-formamido-N(1)-(5-O-phospho-beta-D-ribosyl)acetamidine + L-glutamate + ADP + phosphate + H(+). The enzyme catalyses L-glutamine + H2O = L-glutamate + NH4(+). It participates in purine metabolism; IMP biosynthesis via de novo pathway; 5-amino-1-(5-phospho-D-ribosyl)imidazole from N(2)-formyl-N(1)-(5-phospho-D-ribosyl)glycinamide: step 1/2. In terms of biological role, part of the phosphoribosylformylglycinamidine synthase complex involved in the purines biosynthetic pathway. Catalyzes the ATP-dependent conversion of formylglycinamide ribonucleotide (FGAR) and glutamine to yield formylglycinamidine ribonucleotide (FGAM) and glutamate. The FGAM synthase complex is composed of three subunits. PurQ produces an ammonia molecule by converting glutamine to glutamate. PurL transfers the ammonia molecule to FGAR to form FGAM in an ATP-dependent manner. PurS interacts with PurQ and PurL and is thought to assist in the transfer of the ammonia molecule from PurQ to PurL. The sequence is that of Phosphoribosylformylglycinamidine synthase subunit PurQ from Saccharolobus solfataricus (strain ATCC 35092 / DSM 1617 / JCM 11322 / P2) (Sulfolobus solfataricus).